We begin with the raw amino-acid sequence, 228 residues long: 7-cyano-7-deazaguanine synthase (228 aa).

16–26 (FSGGQDSTTCL) is a binding site for ATP. Zn(2+)-binding residues include Cys-195, Cys-203, Cys-206, and Cys-209.

Belongs to the QueC family. Zn(2+) serves as cofactor.

The enzyme catalyses 7-carboxy-7-deazaguanine + NH4(+) + ATP = 7-cyano-7-deazaguanine + ADP + phosphate + H2O + H(+). It functions in the pathway purine metabolism; 7-cyano-7-deazaguanine biosynthesis. Functionally, catalyzes the ATP-dependent conversion of 7-carboxy-7-deazaguanine (CDG) to 7-cyano-7-deazaguanine (preQ(0)). The chain is 7-cyano-7-deazaguanine synthase from Haemophilus influenzae (strain ATCC 51907 / DSM 11121 / KW20 / Rd).